The chain runs to 528 residues: Lysine--tRNA ligase (528 aa).

The short motif at 36–44 (PSGTVHIGN) is the 'HIGH' region element. The 'KMSKS' region motif lies at 287-291 (KMSSS).

This sequence belongs to the class-I aminoacyl-tRNA synthetase family.

Its subcellular location is the cytoplasm. It carries out the reaction tRNA(Lys) + L-lysine + ATP = L-lysyl-tRNA(Lys) + AMP + diphosphate. This is Lysine--tRNA ligase (lysS) from Treponema pallidum (strain Nichols).